A 943-amino-acid chain; its full sequence is Lysine-specific demethylase JMJ21 (943 aa).

One can recognise an F-box domain in the interval 14-60 (LGSLSVLPDETICVLLEYLAPRDIAHLACVSSVMYILCNEEPLWMSL). The 164-residue stretch at 216-379 (EAAPELLKDY…FVCLDMAPGY (164 aa)) folds into the JmjC domain. Residues histidine 262, aspartate 264, and histidine 347 each coordinate Fe cation. Acidic residues predominate over residues 396 to 410 (NSEDLEEETHDEEDN). The segment at 396 to 438 (NSEDLEEETHDEEDNTLSYSDLTRKEKRTRMNGGGETENREED) is disordered.

It belongs to the JARID1 histone demethylase family. The cofactor is Fe(2+). In terms of tissue distribution, mostly expressed in leaves, and, to a lower extent, in inflorescences, roots, siliques and stems.

The protein localises to the nucleus. In terms of biological role, may function as histone H3 lysine demethylase and be involved in regulation of gene expression. The polypeptide is Lysine-specific demethylase JMJ21 (Arabidopsis thaliana (Mouse-ear cress)).